The primary structure comprises 309 residues: Ribosomal RNA small subunit methyltransferase H (309 aa).

S-adenosyl-L-methionine-binding positions include 32–34 (AGH), Asp52, Phe79, Asp100, and Gln107.

The protein belongs to the methyltransferase superfamily. RsmH family.

Its subcellular location is the cytoplasm. It catalyses the reaction cytidine(1402) in 16S rRNA + S-adenosyl-L-methionine = N(4)-methylcytidine(1402) in 16S rRNA + S-adenosyl-L-homocysteine + H(+). Specifically methylates the N4 position of cytidine in position 1402 (C1402) of 16S rRNA. The chain is Ribosomal RNA small subunit methyltransferase H from Mycoplasma capricolum subsp. capricolum (strain California kid / ATCC 27343 / NCTC 10154).